The sequence spans 464 residues: Kynureninase 2 (464 aa).

Residues leucine 135, threonine 136, 163–166, aspartate 248, histidine 251, and tyrosine 273 contribute to the pyridoxal 5'-phosphate site; that span reads FPSD. Residue lysine 274 is modified to N6-(pyridoxal phosphate)lysine. The pyridoxal 5'-phosphate site is built by tryptophan 313 and asparagine 341.

Belongs to the kynureninase family. As to quaternary structure, homodimer. Pyridoxal 5'-phosphate serves as cofactor.

The protein localises to the cytoplasm. The catalysed reaction is L-kynurenine + H2O = anthranilate + L-alanine + H(+). It carries out the reaction 3-hydroxy-L-kynurenine + H2O = 3-hydroxyanthranilate + L-alanine + H(+). It functions in the pathway amino-acid degradation; L-kynurenine degradation; L-alanine and anthranilate from L-kynurenine: step 1/1. It participates in cofactor biosynthesis; NAD(+) biosynthesis; quinolinate from L-kynurenine: step 2/3. Its function is as follows. Catalyzes the cleavage of L-kynurenine (L-Kyn) and L-3-hydroxykynurenine (L-3OHKyn) into anthranilic acid (AA) and 3-hydroxyanthranilic acid (3-OHAA), respectively. This chain is Kynureninase 2 (bna5-2), found in Aspergillus fumigatus (strain CBS 144.89 / FGSC A1163 / CEA10) (Neosartorya fumigata).